Reading from the N-terminus, the 303-residue chain is Aspartate carbamoyltransferase catalytic subunit (303 aa).

Residues arginine 49 and threonine 50 each contribute to the carbamoyl phosphate site. Lysine 77 contacts L-aspartate. 3 residues coordinate carbamoyl phosphate: arginine 99, histidine 126, and glutamine 129. Positions 159 and 211 each coordinate L-aspartate. Residues serine 252 and proline 253 each coordinate carbamoyl phosphate.

Belongs to the aspartate/ornithine carbamoyltransferase superfamily. ATCase family. Heterododecamer (2C3:3R2) of six catalytic PyrB chains organized as two trimers (C3), and six regulatory PyrI chains organized as three dimers (R2).

The catalysed reaction is carbamoyl phosphate + L-aspartate = N-carbamoyl-L-aspartate + phosphate + H(+). The protein operates within pyrimidine metabolism; UMP biosynthesis via de novo pathway; (S)-dihydroorotate from bicarbonate: step 2/3. Its function is as follows. Catalyzes the condensation of carbamoyl phosphate and aspartate to form carbamoyl aspartate and inorganic phosphate, the committed step in the de novo pyrimidine nucleotide biosynthesis pathway. The sequence is that of Aspartate carbamoyltransferase catalytic subunit from Listeria welshimeri serovar 6b (strain ATCC 35897 / DSM 20650 / CCUG 15529 / CIP 8149 / NCTC 11857 / SLCC 5334 / V8).